The primary structure comprises 231 residues: Cutinase 2 (231 aa).

A signal peptide spans 1-16 (MKFFALTTLLAATASA). Cysteines 48 and 126 form a disulfide. The active-site Nucleophile is the serine 137. An intrachain disulfide couples cysteine 188 to cysteine 195. Aspartate 192 is a catalytic residue. Histidine 205 acts as the Proton donor/acceptor in catalysis.

This sequence belongs to the cutinase family. Post-translationally, the 2 disulfide bonds play a critical role in holding the catalytic residues in juxta-position; reduction of the disulfide bridges results in the complete inactivation of the enzyme.

Its subcellular location is the secreted. The catalysed reaction is cutin + H2O = cutin monomers.. In terms of biological role, catalyzes the hydrolysis of complex carboxylic polyesters found in the cell wall of plants. Degrades cutin, a macromolecule that forms the structure of the plant cuticle. Allows pathogenic fungi to penetrate through the cuticular barrier into the host plant during the initial stage of fungal infection. This Fusarium vanettenii (Neocosmospora pisi) protein is Cutinase 2 (CUT2).